The following is a 264-amino-acid chain: Rhamnosyltransferase WbbL (264 aa).

Belongs to the glycosyltransferase 2 family.

The protein operates within bacterial outer membrane biogenesis; lipopolysaccharide biosynthesis. Rhamnosyltransferase involved in lipopolysaccharide biosynthesis. The sequence is that of Rhamnosyltransferase WbbL (wbbL) from Escherichia coli (strain K12).